Consider the following 210-residue polypeptide: Cilia- and flagella-associated protein 418 (210 aa).

The segment at 1 to 77 (MAKDLDELLD…LINEIFEEPN (77 aa)) is required for interaction with FAM161A. The segment at 24–59 (LDLGERPKGGSGGGGTHSGDRNGAQEKDTLRSTETF) is disordered. Over residues 41–59 (SGDRNGAQEKDTLRSTETF) the composition is skewed to basic and acidic residues.

In terms of assembly, interacts (via N-terminus) with FAM161A (via central region); the interaction is direct.

Its subcellular location is the cytoplasm. It is found in the photoreceptor inner segment. In terms of biological role, may be involved in photoreceptor outer segment disk morphogenesis. This is Cilia- and flagella-associated protein 418 from Rattus norvegicus (Rat).